We begin with the raw amino-acid sequence, 724 residues long: 1,3-beta-galactosyl-N-acetylhexosamine phosphorylase Cphy3030 (724 aa).

Aspartate 316 (proton donor) is an active-site residue.

It belongs to the glycoside hydrolase 112 family.

It catalyses the reaction beta-D-galactosyl-(1-&gt;3)-N-acetyl-D-glucosamine + phosphate = alpha-D-galactose 1-phosphate + N-acetyl-D-glucosamine. Functionally, reversibly phosphorolyzes beta-D-galactopyranosyl-(1-&gt;3)-N-acetyl-D-glucosamine to form alpha-D-galactopyranose 1-phosphate and acetyl-D-glucosamine. Active towards galacto-N-biose and lacto-N-biose. Does not phosphorolyze galacto-N-tetraose or lacto-N-tetraose. In the reverse reaction has activity toward N-acetyl-D-glucosamine and N-acetyl-D-galactosamine, but not L-rhamnose, D-glucose or D-galactose. The polypeptide is 1,3-beta-galactosyl-N-acetylhexosamine phosphorylase Cphy3030 (Lachnoclostridium phytofermentans (strain ATCC 700394 / DSM 18823 / ISDg) (Clostridium phytofermentans)).